The sequence spans 426 residues: Phosphomethylpyrimidine synthase (426 aa).

Substrate contacts are provided by residues Asn-65, Met-94, Tyr-123, His-162, Ser-184–Gly-186, Asp-225–Arg-228, and Glu-264. His-268 contributes to the Zn(2+) binding site. Residue Tyr-291 participates in substrate binding. Residue His-332 coordinates Zn(2+). 3 residues coordinate [4Fe-4S] cluster: Cys-408, Cys-411, and Cys-415.

This sequence belongs to the ThiC family. Requires [4Fe-4S] cluster as cofactor.

The catalysed reaction is 5-amino-1-(5-phospho-beta-D-ribosyl)imidazole + S-adenosyl-L-methionine = 4-amino-2-methyl-5-(phosphooxymethyl)pyrimidine + CO + 5'-deoxyadenosine + formate + L-methionine + 3 H(+). It functions in the pathway cofactor biosynthesis; thiamine diphosphate biosynthesis. Catalyzes the synthesis of the hydroxymethylpyrimidine phosphate (HMP-P) moiety of thiamine from aminoimidazole ribotide (AIR) in a radical S-adenosyl-L-methionine (SAM)-dependent reaction. The sequence is that of Phosphomethylpyrimidine synthase from Methanococcus vannielii (strain ATCC 35089 / DSM 1224 / JCM 13029 / OCM 148 / SB).